The sequence spans 268 residues: MRRIAVMGAAGRMGKTLVEAVQQRSPASGLTAAIVRPGSTLIGADAGELASLGRIGVSLSGNLEQVADEFDVLIDFTLPDVMLKNLAFCRKAGKAMVIGTTGLTLEQKQLLAEAGKDIPIVFAANFSVGVNLSLKLLDLAARVLGDEADIEIIETHHRHKIDAPSGTALRMGEAIADALGRDLSKVAVYGREGHTGARARDTIGFATVRGGDVVGDHTVLFASEGERLEITHKASSRMTFAKGAVRAALWLEGRAAGLYDMRDVLDLH.

NAD(+) is bound at residue 8 to 13 (GAAGRM). NADP(+) is bound at residue arginine 36. NAD(+) is bound by residues 99–101 (GTT) and 123–126 (AANF). Residue histidine 156 is the Proton donor/acceptor of the active site. Position 157 (histidine 157) interacts with (S)-2,3,4,5-tetrahydrodipicolinate. Lysine 160 acts as the Proton donor in catalysis. 166 to 167 (GT) is a binding site for (S)-2,3,4,5-tetrahydrodipicolinate.

Belongs to the DapB family.

Its subcellular location is the cytoplasm. It catalyses the reaction (S)-2,3,4,5-tetrahydrodipicolinate + NAD(+) + H2O = (2S,4S)-4-hydroxy-2,3,4,5-tetrahydrodipicolinate + NADH + H(+). It carries out the reaction (S)-2,3,4,5-tetrahydrodipicolinate + NADP(+) + H2O = (2S,4S)-4-hydroxy-2,3,4,5-tetrahydrodipicolinate + NADPH + H(+). Its pathway is amino-acid biosynthesis; L-lysine biosynthesis via DAP pathway; (S)-tetrahydrodipicolinate from L-aspartate: step 4/4. Its function is as follows. Catalyzes the conversion of 4-hydroxy-tetrahydrodipicolinate (HTPA) to tetrahydrodipicolinate. This Pseudomonas fluorescens (strain SBW25) protein is 4-hydroxy-tetrahydrodipicolinate reductase.